The chain runs to 123 residues: Holo-[acyl-carrier-protein] synthase (123 aa).

Mg(2+) is bound by residues Asp8 and Glu60.

Belongs to the P-Pant transferase superfamily. AcpS family. It depends on Mg(2+) as a cofactor.

The protein localises to the cytoplasm. The enzyme catalyses apo-[ACP] + CoA = holo-[ACP] + adenosine 3',5'-bisphosphate + H(+). Functionally, transfers the 4'-phosphopantetheine moiety from coenzyme A to a Ser of acyl-carrier-protein. This is Holo-[acyl-carrier-protein] synthase from Wolbachia pipientis wMel.